The chain runs to 357 residues: Protein pelota homolog (357 aa).

Belongs to the eukaryotic release factor 1 family. Pelota subfamily. In terms of assembly, monomer. A divalent metal cation serves as cofactor.

It localises to the cytoplasm. Its function is as follows. May function in recognizing stalled ribosomes, interact with stem-loop structures in stalled mRNA molecules, and effect endonucleolytic cleavage of the mRNA. May play a role in the release non-functional ribosomes and degradation of damaged mRNAs. Has endoribonuclease activity. The polypeptide is Protein pelota homolog (Thermococcus kodakarensis (strain ATCC BAA-918 / JCM 12380 / KOD1) (Pyrococcus kodakaraensis (strain KOD1))).